Here is a 143-residue protein sequence, read N- to C-terminus: MKVEIYTDGACKGNPGPGGWGVLLRYNGREKTLHGGEAQTTNNRMELMAAIKGLEALKRPCEVDLYTDSQYLQQGMKEWIKTWKRNGWRNSKKELVKNAELWKSLDNLASIHNIHWHWVKGHSGHLENDLVDALANLGIEELS.

Residues 1–140 (MKVEIYTDGA…VDALANLGIE (140 aa)) form the RNase H type-1 domain. Residues D8, E46, D68, and D132 each coordinate Mg(2+).

This sequence belongs to the RNase H family. In terms of assembly, monomer. Mg(2+) serves as cofactor.

The protein resides in the cytoplasm. The enzyme catalyses Endonucleolytic cleavage to 5'-phosphomonoester.. Endonuclease that specifically degrades the RNA of RNA-DNA hybrids. This chain is Ribonuclease H, found in Legionella pneumophila (strain Paris).